Here is a 1350-residue protein sequence, read N- to C-terminus: ABC transporter G family member 45 (1350 aa).

The disordered stretch occupies residues Met-1–Pro-23. The ABC transporter 1 domain occupies Ala-85–Ser-357. Gly-118–Thr-125 provides a ligand contact to ATP. The region spanning Asn-434 to Phe-647 is the ABC transmembrane type-2 1 domain. A run of 6 helical transmembrane segments spans residues Val-453–Leu-473, Ala-491–Ile-511, Ile-523–Ser-543, Val-557–Met-577, Met-597–Ile-617, and Ile-683–Leu-703. One can recognise an ABC transporter 2 domain in the interval Leu-749–Pro-1001. Residue Gly-794–Thr-801 coordinates ATP. The ABC transmembrane type-2 2 domain occupies Ala-1074 to Leu-1288. The next 7 membrane-spanning stretches (helical) occupy residues Ile-1099 to Ile-1119, Phe-1126 to Ile-1146, Leu-1181 to Phe-1201, Phe-1208 to Met-1228, Ile-1238 to Ile-1258, Trp-1269 to Gly-1289, and Leu-1322 to Ile-1342.

This sequence belongs to the ABC transporter superfamily. ABCG family. PDR (TC 3.A.1.205) subfamily.

The protein resides in the membrane. In terms of biological role, may be a general defense protein. The polypeptide is ABC transporter G family member 45 (Oryza sativa subsp. japonica (Rice)).